The primary structure comprises 136 residues: Cytidine deaminase (136 aa).

One can recognise a CMP/dCMP-type deaminase domain in the interval 1–128 (MNRQELITEA…ELLPGAFSSE (128 aa)). 42–44 (NIE) provides a ligand contact to substrate. Residue Cys53 participates in Zn(2+) binding. The Proton donor role is filled by Glu55. Residues Cys86 and Cys89 each coordinate Zn(2+).

Belongs to the cytidine and deoxycytidylate deaminase family. As to quaternary structure, homotetramer. Zn(2+) serves as cofactor.

It carries out the reaction cytidine + H2O + H(+) = uridine + NH4(+). It catalyses the reaction 2'-deoxycytidine + H2O + H(+) = 2'-deoxyuridine + NH4(+). In terms of biological role, this enzyme scavenges exogenous and endogenous cytidine and 2'-deoxycytidine for UMP synthesis. The sequence is that of Cytidine deaminase (cdd) from Bacillus subtilis (strain 168).